The following is a 503-amino-acid chain: Maturase K (503 aa).

It belongs to the intron maturase 2 family. MatK subfamily.

The protein localises to the plastid. It is found in the chloroplast. In terms of biological role, usually encoded in the trnK tRNA gene intron. Probably assists in splicing its own and other chloroplast group II introns. This Vicia villosa (Hairy vetch) protein is Maturase K.